The following is a 309-amino-acid chain: 2-dehydro-3-deoxygluconokinase (309 aa).

Residues 28 to 32 (GDTLN), tyrosine 88, 102 to 104 (YWR), and arginine 170 each bind substrate. ATP is bound by residues 168 to 170 (NYR), 228 to 233 (KRGADS), and 261 to 264 (AAGD). Aspartate 264 provides a ligand contact to substrate. The active-site Proton acceptor is aspartate 264.

Belongs to the carbohydrate kinase pfkB family.

The enzyme catalyses 2-dehydro-3-deoxy-D-gluconate + ATP = 2-dehydro-3-deoxy-6-phospho-D-gluconate + ADP + H(+). It functions in the pathway carbohydrate acid metabolism; 2-dehydro-3-deoxy-D-gluconate degradation; D-glyceraldehyde 3-phosphate and pyruvate from 2-dehydro-3-deoxy-D-gluconate: step 1/2. In terms of biological role, catalyzes the phosphorylation of 2-keto-3-deoxygluconate (KDG) to produce 2-keto-3-deoxy-6-phosphogluconate (KDPG). This chain is 2-dehydro-3-deoxygluconokinase (kdgK), found in Escherichia coli (strain ATCC 9637 / CCM 2024 / DSM 1116 / LMG 11080 / NBRC 13500 / NCIMB 8666 / NRRL B-766 / W).